The following is a 181-amino-acid chain: Peptidyl-prolyl cis-trans isomerase H (181 aa).

A PPIase cyclophilin-type domain is found at 17 to 180 (FFDITLGGES…QDVTIIQCGE (164 aa)).

This sequence belongs to the cyclophilin-type PPIase family. PPIase H subfamily.

It localises to the nucleus. The catalysed reaction is [protein]-peptidylproline (omega=180) = [protein]-peptidylproline (omega=0). PPIases accelerate the folding of proteins. It catalyzes the cis-trans isomerization of proline imidic peptide bonds in oligopeptides. The chain is Peptidyl-prolyl cis-trans isomerase H (cyp3) from Aspergillus oryzae (strain ATCC 42149 / RIB 40) (Yellow koji mold).